The sequence spans 183 residues: BLOC-1-related complex subunit 8 homolog (183 aa).

Positions 152 to 183 are disordered; that stretch reads MIGPGTATGRTEAQAATSSNPGELQRSYTTLH. Positions 159–183 are enriched in polar residues; the sequence is TGRTEAQAATSSNPGELQRSYTTLH.

This sequence belongs to the BORCS8 family.

The protein resides in the lysosome membrane. May participate in the coupling of lysosomes to microtubule plus-end-directed kinesin motor. The chain is BLOC-1-related complex subunit 8 homolog from Drosophila melanogaster (Fruit fly).